We begin with the raw amino-acid sequence, 255 residues long: MIDIQNLEDHRKINIQKVGVKGINYPIVVLDKAKGTQHVNASINMYVDLPHHFKGTHMSRFIEVLNEFRGEINIRTFHTILEKVRDKLKAESAHMEITFPYFIEKTAPVSGAKSLMDYICAFSGMNAENKKDFLVGVVVPVTTVCPCSKEISCMGAHNQRSHVTVKVRFKKFFWLEDIIRLVETSASGEVYSLLKRVDEKYVTEQGYANPMFVEDVVRNVAERLNENSNLTWYSVEAENFESIHNHNAYAYVEKE.

It belongs to the GTP cyclohydrolase IV family.

It catalyses the reaction GTP + H2O = 7,8-dihydroneopterin 3'-triphosphate + formate + H(+). It participates in cofactor biosynthesis; 7,8-dihydroneopterin triphosphate biosynthesis; 7,8-dihydroneopterin triphosphate from GTP: step 1/1. In terms of biological role, converts GTP to 7,8-dihydroneopterin triphosphate. In Syntrophus aciditrophicus (strain SB), this protein is GTP cyclohydrolase FolE2.